The following is a 234-amino-acid chain: N-(5'-phosphoribosyl)anthranilate isomerase 1 (234 aa).

Belongs to the TrpF family.

The catalysed reaction is N-(5-phospho-beta-D-ribosyl)anthranilate = 1-(2-carboxyphenylamino)-1-deoxy-D-ribulose 5-phosphate. The protein operates within amino-acid biosynthesis; L-tryptophan biosynthesis; L-tryptophan from chorismate: step 3/5. This chain is N-(5'-phosphoribosyl)anthranilate isomerase 1 (trpF1), found in Methanosarcina mazei (strain ATCC BAA-159 / DSM 3647 / Goe1 / Go1 / JCM 11833 / OCM 88) (Methanosarcina frisia).